Consider the following 532-residue polypeptide: uncharacterized protein (532 aa).

13 helical membrane-spanning segments follow: residues 13-33 (MSLL…QTLL), 53-73 (WLTT…AFLI), 80-100 (SLFL…GIAP), 111-131 (IQAV…LLIF), 142-162 (IFGL…GWII), 169-189 (IMFY…FFIF), 203-223 (LGAI…SEAG), 231-251 (IVLS…VQQL), 273-293 (VINI…PIYL), 306-326 (LLLL…GILF), 334-354 (LAII…QLTI), 361-381 (IMLI…PVMT), and 483-503 (INDA…LSIF).

Belongs to the major facilitator superfamily. EmrB family.

The protein resides in the cell membrane. This is an uncharacterized protein from Bacillus subtilis (strain 168).